The sequence spans 1069 residues: Carbamoyl phosphate synthase large chain (1069 aa).

The segment at 1-401 (MPLNKDIKKV…AFLKGIRSLE (401 aa)) is carboxyphosphate synthetic domain. Residues R129, R169, G175, G176, K208, V210, E215, G241, I242, H243, Q284, and E298 each coordinate ATP. In terms of domain architecture, ATP-grasp 1 spans 133 to 327 (RDMMNRIGEP…IAKLAAKIAL (195 aa)). Residues Q284, E298, and N300 each coordinate Mg(2+). Q284, E298, and N300 together coordinate Mn(2+). The interval 402-549 (IGKYSLDHKK…YSTYEQYDEV (148 aa)) is oligomerization domain. The tract at residues 550–932 (EVSNRRKVIV…ALYKGFVGAN (383 aa)) is carbamoyl phosphate synthetic domain. The ATP-grasp 2 domain maps to 674-864 (DELLERLDIS…IVDIATQVMM (191 aa)). Positions 710, 749, 751, 755, 780, 781, 782, 783, 823, and 835 each coordinate ATP. Positions 823, 835, and 837 each coordinate Mg(2+). Residues Q823, E835, and N837 each coordinate Mn(2+). One can recognise an MGS-like domain in the interval 932–1069 (NMYPSKEKGK…KDLEVFDITK (138 aa)). The segment at 933-1069 (MYPSKEKGKI…KDLEVFDITK (137 aa)) is allosteric domain.

It belongs to the CarB family. As to quaternary structure, composed of two chains; the small (or glutamine) chain promotes the hydrolysis of glutamine to ammonia, which is used by the large (or ammonia) chain to synthesize carbamoyl phosphate. Tetramer of heterodimers (alpha,beta)4. Requires Mg(2+) as cofactor. It depends on Mn(2+) as a cofactor.

The enzyme catalyses hydrogencarbonate + L-glutamine + 2 ATP + H2O = carbamoyl phosphate + L-glutamate + 2 ADP + phosphate + 2 H(+). It carries out the reaction hydrogencarbonate + NH4(+) + 2 ATP = carbamoyl phosphate + 2 ADP + phosphate + 2 H(+). It functions in the pathway amino-acid biosynthesis; L-arginine biosynthesis; carbamoyl phosphate from bicarbonate: step 1/1. It participates in pyrimidine metabolism; UMP biosynthesis via de novo pathway; (S)-dihydroorotate from bicarbonate: step 1/3. In terms of biological role, large subunit of the glutamine-dependent carbamoyl phosphate synthetase (CPSase). CPSase catalyzes the formation of carbamoyl phosphate from the ammonia moiety of glutamine, carbonate, and phosphate donated by ATP, constituting the first step of 2 biosynthetic pathways, one leading to arginine and/or urea and the other to pyrimidine nucleotides. The large subunit (synthetase) binds the substrates ammonia (free or transferred from glutamine from the small subunit), hydrogencarbonate and ATP and carries out an ATP-coupled ligase reaction, activating hydrogencarbonate by forming carboxy phosphate which reacts with ammonia to form carbamoyl phosphate. The sequence is that of Carbamoyl phosphate synthase large chain from Clostridium botulinum (strain Eklund 17B / Type B).